Consider the following 224-residue polypeptide: Fibrillarin-like rRNA/tRNA 2'-O-methyltransferase (224 aa).

S-adenosyl-L-methionine-binding positions include 82-83, 100-101, 125-126, and 145-148; these read TT, EF, DA, and DVAQ.

The protein belongs to the methyltransferase superfamily. Fibrillarin family. As to quaternary structure, interacts with nop5. Component of box C/D small ribonucleoprotein (sRNP) particles that contain rpl7ae, FlpA and nop5, plus a guide RNA.

Functionally, involved in pre-rRNA and tRNA processing. Utilizes the methyl donor S-adenosyl-L-methionine to catalyze the site-specific 2'-hydroxyl methylation of ribose moieties in rRNA and tRNA. Site specificity is provided by a guide RNA that base pairs with the substrate. Methylation occurs at a characteristic distance from the sequence involved in base pairing with the guide RNA. This chain is Fibrillarin-like rRNA/tRNA 2'-O-methyltransferase, found in Methanothermobacter thermautotrophicus (strain ATCC 29096 / DSM 1053 / JCM 10044 / NBRC 100330 / Delta H) (Methanobacterium thermoautotrophicum).